The primary structure comprises 117 residues: Large ribosomal subunit protein bL20 (117 aa).

The protein belongs to the bacterial ribosomal protein bL20 family.

In terms of biological role, binds directly to 23S ribosomal RNA and is necessary for the in vitro assembly process of the 50S ribosomal subunit. It is not involved in the protein synthesizing functions of that subunit. This is Large ribosomal subunit protein bL20 from Gloeothece citriformis (strain PCC 7424) (Cyanothece sp. (strain PCC 7424)).